The primary structure comprises 73 residues: Conotoxin CnIIIF (73 aa).

A signal peptide spans 1-19; it reads MSKLGVLLTICLLLFPLTA. The propeptide occupies 20 to 51; sequence LPMDGDQSVDRPAERMQDDISSGQHPLFNQKR. Disulfide bonds link Cys-53–Cys-72, Cys-54–Cys-70, and Cys-60–Cys-73.

It belongs to the conotoxin M superfamily. As to expression, expressed by the venom duct.

It is found in the secreted. In terms of biological role, shows a paralytic effect in fish. The protein is Conotoxin CnIIIF of Conus consors (Singed cone).